Here is a 70-residue protein sequence, read N- to C-terminus: Large ribosomal subunit protein eL38 (70 aa).

Belongs to the eukaryotic ribosomal protein eL38 family.

This is Large ribosomal subunit protein eL38 (RpL38) from Timarcha balearica.